Consider the following 212-residue polypeptide: Orotate phosphoribosyltransferase (212 aa).

Lys-26 serves as a coordination point for 5-phospho-alpha-D-ribose 1-diphosphate. 34–35 contributes to the orotate binding site; it reads FF. 5-phospho-alpha-D-ribose 1-diphosphate-binding positions include 72 to 73, Arg-99, Lys-100, Lys-103, His-105, and 124 to 132; these read YK and DDVITVGTA. Orotate contacts are provided by Thr-128 and Arg-156.

Belongs to the purine/pyrimidine phosphoribosyltransferase family. PyrE subfamily. Homodimer. Requires Mg(2+) as cofactor.

It catalyses the reaction orotidine 5'-phosphate + diphosphate = orotate + 5-phospho-alpha-D-ribose 1-diphosphate. It participates in pyrimidine metabolism; UMP biosynthesis via de novo pathway; UMP from orotate: step 1/2. Functionally, catalyzes the transfer of a ribosyl phosphate group from 5-phosphoribose 1-diphosphate to orotate, leading to the formation of orotidine monophosphate (OMP). The chain is Orotate phosphoribosyltransferase from Ruthia magnifica subsp. Calyptogena magnifica.